Reading from the N-terminus, the 322-residue chain is Ribokinase (322 aa).

Residues 25-27, 53-57, and E154 contribute to the substrate site; these read MTD and GKGAN. Residues N199, 235–240, and T256 contribute to the ATP site; that span reads TLGAEG. The K(+) site is built by D263 and T265. ATP-binding positions include 268–269 and N295; that span reads GD. Residue D269 coordinates substrate. The Proton acceptor role is filled by D269. Positions 301, 304, 306, and 310 each coordinate K(+).

This sequence belongs to the carbohydrate kinase PfkB family. Ribokinase subfamily. In terms of assembly, homodimer. The cofactor is Mg(2+).

Its subcellular location is the cytoplasm. The protein resides in the nucleus. It carries out the reaction D-ribose + ATP = D-ribose 5-phosphate + ADP + H(+). The protein operates within carbohydrate metabolism; D-ribose degradation; D-ribose 5-phosphate from beta-D-ribopyranose: step 2/2. With respect to regulation, activated by a monovalent cation that binds near, but not in, the active site. The most likely occupant of the site in vivo is potassium. Ion binding induces a conformational change that may alter substrate affinity. Competitively inhibited by phosphonoacetic acid, etidronate, 2-carboxethylphosphonic acid, N-(phosphonomethyl)glycine, N-(phosphonomethyl)iminodiacetic acid and clodronate. Functionally, catalyzes the phosphorylation of ribose at O-5 in a reaction requiring ATP and magnesium. The resulting D-ribose-5-phosphate can then be used either for sythesis of nucleotides, histidine, and tryptophan, or as a component of the pentose phosphate pathway. The polypeptide is Ribokinase (Homo sapiens (Human)).